Reading from the N-terminus, the 377-residue chain is Actin-related protein 2/3 complex subunit 1 (377 aa).

5 WD repeats span residues 9–48 (ILPKPSYEHAFNSQRTEFVTTTATNQVELYEQDGNGWKHA), 53–92 (DHDKIVTCVDWAPKSNRIVTCSQDRNAYVYEKRPDGTWKQ), 98–139 (RLNR…WVSK), 144–183 (PLRSTILSLDWHPNNVLLAAGCADRKAYVLSAYVRDVDAK), and 203–242 (PSGGWVHAVGFSPSGNALAYAGHDSSVTIAYPSAPEQPPR). A disordered region spans residues 293 to 313 (GTSKTSFTHTGNTGEGREEEG). The WD 6 repeat unit spans residues 342-376 (VHQNMIATLRPYAGTPGNITAFTSSGTDGRVVLWT).

This sequence belongs to the WD repeat ARPC1 family. In terms of assembly, component of the Arp2/3 complex composed of arp2, act2, arc1/p41-ARC, arc2/p34-ARC, arc3/p21-ARC, arc4/p20-ARC and arc5/p16-ARC.

Its subcellular location is the cytoplasm. It is found in the cytoskeleton. It localises to the actin patch. In terms of biological role, functions as a component of the Arp2/3 complex which is involved in regulation of actin polymerization and together with an activating nucleation-promoting factor (NPF) mediates the formation of branched actin networks. The polypeptide is Actin-related protein 2/3 complex subunit 1 (arc1) (Schizosaccharomyces pombe (strain 972 / ATCC 24843) (Fission yeast)).